The primary structure comprises 274 residues: Cytochrome b-c1 complex subunit Rieske, mitochondrial (274 aa).

Topologically, residues 79-103 are mitochondrial matrix; the sequence is SHTDVKVPDFYDYRRLEVLDSTKSS. A helical transmembrane segment spans residues 104–140; that stretch reads RESSEARKGFSYLVTAVTTVGVAYAAKNVVTQFISSM. The Mitochondrial intermembrane portion of the chain corresponds to 141–274; the sequence is SASADVLAMA…FTGDDVVVVG (134 aa). A Rieske domain is found at 187-272; that stretch reads EAAVELSQLR…YEFTGDDVVV (86 aa). Residues Cys-217, His-219, Cys-236, His-239, and Ser-241 each contribute to the [2Fe-2S] cluster site. Cys-222 and Cys-238 are disulfide-bonded.

Belongs to the Rieske iron-sulfur protein family. Component of the ubiquinol-cytochrome c oxidoreductase (cytochrome b-c1 complex, complex III, CIII), a multisubunit enzyme composed of 11 subunits. The complex is composed of 3 respiratory subunits cytochrome b, cytochrome c1 and Rieske protein UQCRFS1, 2 core protein subunits UQCRC1/QCR1 and UQCRC2/QCR2, and 6 low-molecular weight protein subunits UQCRH/QCR6, UQCRB/QCR7, UQCRQ/QCR8, UQCR10/QCR9, UQCR11/QCR10 and subunit 9, the cleavage product of Rieske protein UQCRFS1. The complex exists as an obligatory dimer and forms supercomplexes (SCs) in the inner mitochondrial membrane with NADH-ubiquinone oxidoreductase (complex I, CI) and cytochrome c oxidase (complex IV, CIV), resulting in different assemblies (supercomplex SCI(1)III(2)IV(1) and megacomplex MCI(2)III(2)IV(2)). Incorporation of the Rieske protein UQCRFS1 is the penultimate step in complex III assembly. Interacts with TTC19, which is involved in the clearance of UQCRFS1 fragments. As to quaternary structure, component of the ubiquinol-cytochrome c oxidoreductase (cytochrome b-c1 complex, complex III, CIII). Subunit 9 corresponds to the mitochondrial targeting sequence (MTS) of Rieske protein UQCRFS1. It is retained after processing and incorporated inside complex III, where it remains bound to the complex and localizes between the 2 core subunits UQCRC1/QCR1 and UQCRC2/QCR2. It depends on [2Fe-2S] cluster as a cofactor. Proteolytic processing is necessary for the correct insertion of UQCRFS1 in the complex III dimer. Several fragments are generated during UQCRFS1 insertion, most probably due to the endogenous matrix-processing peptidase (MPP) activity of the 2 core protein subunits UQCRC1/QCR1 and UQCRC2/QCR2, which are homologous to the 2 mitochondrial-processing peptidase (MPP) subunits beta-MPP and alpha-MPP respectively. The action of the protease is also necessary for the clearance of the UQCRFS1 fragments.

The protein localises to the mitochondrion inner membrane. The enzyme catalyses a quinol + 2 Fe(III)-[cytochrome c](out) = a quinone + 2 Fe(II)-[cytochrome c](out) + 2 H(+)(out). Its function is as follows. Component of the ubiquinol-cytochrome c oxidoreductase, a multisubunit transmembrane complex that is part of the mitochondrial electron transport chain which drives oxidative phosphorylation. The respiratory chain contains 3 multisubunit complexes succinate dehydrogenase (complex II, CII), ubiquinol-cytochrome c oxidoreductase (cytochrome b-c1 complex, complex III, CIII) and cytochrome c oxidase (complex IV, CIV), that cooperate to transfer electrons derived from NADH and succinate to molecular oxygen, creating an electrochemical gradient over the inner membrane that drives transmembrane transport and the ATP synthase. The cytochrome b-c1 complex catalyzes electron transfer from ubiquinol to cytochrome c, linking this redox reaction to translocation of protons across the mitochondrial inner membrane, with protons being carried across the membrane as hydrogens on the quinol. In the process called Q cycle, 2 protons are consumed from the matrix, 4 protons are released into the intermembrane space and 2 electrons are passed to cytochrome c. The Rieske protein is a catalytic core subunit containing a [2Fe-2S] iron-sulfur cluster. It cycles between 2 conformational states during catalysis to transfer electrons from the quinol bound in the Q(0) site in cytochrome b to cytochrome c1. Incorporation of UQCRFS1 is the penultimate step in complex III assembly. Functionally, component of the ubiquinol-cytochrome c oxidoreductase (cytochrome b-c1 complex, complex III, CIII). UQCRFS1 undergoes proteolytic processing once it is incorporated in the complex III dimer. One of the fragments, called subunit 9, corresponds to its mitochondrial targeting sequence (MTS). The proteolytic processing is necessary for the correct insertion of UQCRFS1 in the complex III dimer, but the persistence of UQCRFS1-derived fragments may prevent newly imported UQCRFS1 to be processed and assembled into complex III and is detrimental for the complex III structure and function. The chain is Cytochrome b-c1 complex subunit Rieske, mitochondrial (UQCRFS1) from Chlorocebus aethiops (Green monkey).